Here is a 305-residue protein sequence, read N- to C-terminus: tRNA dimethylallyltransferase (305 aa).

Residue 14–21 coordinates ATP; the sequence is GPTASGKT. Substrate is bound at residue 16–21; sequence TASGKT. Interaction with substrate tRNA regions lie at residues 39–42, 163–167, and 243–248; these read DSAL, QRIIR, and RCVGYR.

This sequence belongs to the IPP transferase family. In terms of assembly, monomer. Mg(2+) serves as cofactor.

The catalysed reaction is adenosine(37) in tRNA + dimethylallyl diphosphate = N(6)-dimethylallyladenosine(37) in tRNA + diphosphate. Catalyzes the transfer of a dimethylallyl group onto the adenine at position 37 in tRNAs that read codons beginning with uridine, leading to the formation of N6-(dimethylallyl)adenosine (i(6)A). The protein is tRNA dimethylallyltransferase of Vesicomyosocius okutanii subsp. Calyptogena okutanii (strain HA).